A 772-amino-acid polypeptide reads, in one-letter code: NAD(P)H-quinone oxidoreductase subunit 5, chloroplastic (772 aa).

15 helical membrane passes run 8-28 (IWIVPVCPFVASMSVGLGLFF), 39-59 (ICAIISIFLLGIAMFISFSIF), 87-107 (FLIDPLTSTMLVSVTSVGILV), 120-140 (GYVRFFAYLSLFTASMLGLVL), 147-167 (IYIFWELVGMCSYLLIGFWFS), 185-205 (GDFGLLLGILGTYWITGSFDI), 219-239 (NGVNLFLANMCALLLFLGPAA), 258-278 (TPISALIHAATMVAAGIFFVA), 291-311 (MNIISWVGGITALLGATIALA), 395-415 (GTTFLLGTLSLCGIPPFACFW), 425-445 (WIASASLGWIAWCTAGLTGFY), 574-594 (LFSLISLAIPTLFIGFIGVPF), 631-651 (IPSVSIALVGVSISFFIYGPV), 710-730 (WIIDGIVNGIGILSFFGGEGM), and 738-758 (IPSYLFGLIIGNILMLIILII).

The protein belongs to the complex I subunit 5 family. In terms of assembly, NDH is composed of at least 16 different subunits, 5 of which are encoded in the nucleus.

Its subcellular location is the plastid. It localises to the chloroplast thylakoid membrane. The catalysed reaction is a plastoquinone + NADH + (n+1) H(+)(in) = a plastoquinol + NAD(+) + n H(+)(out). It carries out the reaction a plastoquinone + NADPH + (n+1) H(+)(in) = a plastoquinol + NADP(+) + n H(+)(out). NDH shuttles electrons from NAD(P)H:plastoquinone, via FMN and iron-sulfur (Fe-S) centers, to quinones in the photosynthetic chain and possibly in a chloroplast respiratory chain. The immediate electron acceptor for the enzyme in this species is believed to be plastoquinone. Couples the redox reaction to proton translocation, and thus conserves the redox energy in a proton gradient. The polypeptide is NAD(P)H-quinone oxidoreductase subunit 5, chloroplastic (ndhF) (Angiopteris evecta (Mule's foot fern)).